The following is a 184-amino-acid chain: ATP-dependent protease subunit HslV (184 aa).

The active site involves Thr12. Positions 166, 169, and 172 each coordinate Na(+).

Belongs to the peptidase T1B family. HslV subfamily. As to quaternary structure, a double ring-shaped homohexamer of HslV is capped on each side by a ring-shaped HslU homohexamer. The assembly of the HslU/HslV complex is dependent on binding of ATP.

It is found in the cytoplasm. The catalysed reaction is ATP-dependent cleavage of peptide bonds with broad specificity.. Its activity is regulated as follows. Allosterically activated by HslU binding. Functionally, protease subunit of a proteasome-like degradation complex believed to be a general protein degrading machinery. The sequence is that of ATP-dependent protease subunit HslV from Brucella melitensis biotype 1 (strain ATCC 23456 / CCUG 17765 / NCTC 10094 / 16M).